Reading from the N-terminus, the 417-residue chain is MFSRDVRLETYDPELAKAIAAEAGRQEDHVELIASENYCSPLVMEAQGSQLTNKYAEGYPGKRYYGGCEFVDIAEQLAIDRIKQVFGADYANVQPHSGSQANQAVYLALLQPGDTILGMSLAHGGHLTHGAKVNASGKLFNAVQYGVNEQGLIDYDEVQRLATEHKPKMVIAGFSAYSQKIDWARFRAIADSVGAYLFVDMAHVAGLVAAGVYPSPMDHAHVVTSTTHKTLRGPRGGIILAKGAGEDLVKKLQSIVFPGIQGGPLMHVIAAKAVAFKEALEPEFKTYQQQVVKNAQAMANTLIARGYKIVSGGTENHLMLVDMIGRDVSGKDAEAALGKAHITVNKNSVPNDPRSPFVTSGLRLGTPAITTRGYQEQDCVDLANWIADVLDAPADDAVLAKVRDAVTAQCKKYPVYG.

(6S)-5,6,7,8-tetrahydrofolate-binding positions include Leu-121 and 125 to 127 (GHL). An N6-(pyridoxal phosphate)lysine modification is found at Lys-229. Residue 355–357 (SPF) coordinates (6S)-5,6,7,8-tetrahydrofolate.

It belongs to the SHMT family. In terms of assembly, homodimer. The cofactor is pyridoxal 5'-phosphate.

Its subcellular location is the cytoplasm. It carries out the reaction (6R)-5,10-methylene-5,6,7,8-tetrahydrofolate + glycine + H2O = (6S)-5,6,7,8-tetrahydrofolate + L-serine. It functions in the pathway one-carbon metabolism; tetrahydrofolate interconversion. It participates in amino-acid biosynthesis; glycine biosynthesis; glycine from L-serine: step 1/1. Catalyzes the reversible interconversion of serine and glycine with tetrahydrofolate (THF) serving as the one-carbon carrier. This reaction serves as the major source of one-carbon groups required for the biosynthesis of purines, thymidylate, methionine, and other important biomolecules. Also exhibits THF-independent aldolase activity toward beta-hydroxyamino acids, producing glycine and aldehydes, via a retro-aldol mechanism. In Xanthomonas campestris pv. campestris (strain 8004), this protein is Serine hydroxymethyltransferase.